We begin with the raw amino-acid sequence, 494 residues long: Cytochrome P450 2A7 (494 aa).

A heme-binding site is contributed by Cys439.

Belongs to the cytochrome P450 family. Heme serves as cofactor.

It is found in the endoplasmic reticulum membrane. The protein localises to the microsome membrane. The enzyme catalyses an organic molecule + reduced [NADPH--hemoprotein reductase] + O2 = an alcohol + oxidized [NADPH--hemoprotein reductase] + H2O + H(+). Cytochromes P450 are a group of heme-thiolate monooxygenases. In liver microsomes, this enzyme is involved in an NADPH-dependent electron transport pathway. It oxidizes a variety of structurally unrelated compounds, including steroids, fatty acids, and xenobiotics. This Homo sapiens (Human) protein is Cytochrome P450 2A7 (CYP2A7).